A 920-amino-acid chain; its full sequence is MKNSKLFFRFLFLFFFFCLESSRGQDNGKTQVNIGVVSDVGTSYPDVAMLCINMSLADFYSSRPQFQTRLVVNVGDSKNDVVGAATAAIDLIKNKQVKAILGPWTSMQAHFLIEIGQKSRVPVVSYSATSPSLTSLRSPYFFRATYEDSSQVHAIKAIIKLFGWREVVPVYIDNTFGEGIMPRLTDSLQDINVRIPYRSVIPLNATDQDISVELLKMMNMPTRVFIVHMSSSLASTVFIKAKELGLMKPGYVWILTNGVMDGLRSINETGIEAMEGVLGIKTYIPKSKDLETFRSRWKRRFPQMELNVYGLWAYDATTALAMAIEDAGINNMTFSNVDTGKNVSELDGLGLSQFGPKLLQTVSTVQFKGLAGDFHFVSGQLQPSVFEIVNMIGTGERSIGFWTEGNGLVKKLDQEPRSIGTLSTWPDHLKHIIWPGEAVSVPKGWEIPTNGKKLRIGVPKRIGFTDLVKVTRDPITNSTVVKGFCIDFFEAVIQAMPYDVSYEFFPFEKPNGEPAGNHNDLVHQVYLGQFDAVVGDTTILANRSSFVDFTLPFMKSGVGLIVPLKDEVKRDKFSFLKPLSIELWLTTLVFFFLVGISVWTLEHRVNSDFRGPANYQASTIFWFAFSTMVFAPRERVLSFGARSLVVTWYFVLLVLTQSYTASLASLLTSQQLNPTITSMSSLLHRGETVGYQRTSFILGKLNETGFPQSSLVPFDTAEECDELLKKGPKNGGVAAAFLGTPYVRLFLGQYCNTYKMVEEPFNVDGFGFVFPIGSPLVADVSRAILKVAESPKAVELEHAWFKKKEQSCPDPVTNPDSNPTVTAIQLGVGSFWFLFLVVFVVCVLALGKFTFCFLWKTKGKDLWKEFLKRDTDSYINDIEKCLCSQEMPENSNKATNQTNYGMELRVRNIVQVNQTDPDCL.

The signal sequence occupies residues 1–24; it reads MKNSKLFFRFLFLFFFFCLESSRG. The Extracellular segment spans residues 25 to 580; the sequence is QDNGKTQVNI…DKFSFLKPLS (556 aa). N-linked (GlcNAc...) asparagine glycans are attached at residues Asn-53, Asn-204, Asn-267, Asn-331, Asn-342, Asn-477, and Asn-542. The helical transmembrane segment at 581–601 threads the bilayer; sequence IELWLTTLVFFFLVGISVWTL. Over 602-610 the chain is Cytoplasmic; sequence EHRVNSDFR. Residues 611 to 631 form a helical membrane-spanning segment; sequence GPANYQASTIFWFAFSTMVFA. The Cytoplasmic portion of the chain corresponds to 632-635; that stretch reads PRER. The chain crosses the membrane as a helical span at residues 636-656; it reads VLSFGARSLVVTWYFVLLVLT. The Extracellular portion of the chain corresponds to 657–830; the sequence is QSYTASLASL…VTAIQLGVGS (174 aa). The N-linked (GlcNAc...) asparagine glycan is linked to Asn-702. The helical transmembrane segment at 831-851 threads the bilayer; it reads FWFLFLVVFVVCVLALGKFTF. The Cytoplasmic segment spans residues 852–920; sequence CFLWKTKGKD…QVNQTDPDCL (69 aa).

It belongs to the glutamate-gated ion channel (TC 1.A.10.1) family. May form heteromers. Expressed predominantly in roots.

Its subcellular location is the membrane. Functionally, glutamate-gated receptor that probably acts as a non-selective cation channel. May be involved in light-signal transduction and calcium homeostasis via the regulation of calcium influx into cells. In Arabidopsis thaliana (Mouse-ear cress), this protein is Glutamate receptor 2.2 (GLR2.2).